Here is a 362-residue protein sequence, read N- to C-terminus: Heme A synthase (362 aa).

5 helical membrane-spanning segments follow: residues 15–35, 104–124, 129–149, 161–181, and 200–220; these read VRIW…VGGA, VIGI…AIAP, ALWA…WMVA, VRLA…VWTL, and AIAL…VAGL. His-264 contributes to the heme binding site. The next 3 helical transmembrane spans lie at 266–285, 293–313, and 316–336; these read MMAY…ALRA, GALW…LTLL, and VPIG…TLAV. His-324 is a heme binding site.

Belongs to the COX15/CtaA family. Type 2 subfamily. As to quaternary structure, interacts with CtaB. Heme b serves as cofactor.

Its subcellular location is the cell membrane. The catalysed reaction is Fe(II)-heme o + 2 A + H2O = Fe(II)-heme a + 2 AH2. It participates in porphyrin-containing compound metabolism; heme A biosynthesis; heme A from heme O: step 1/1. Its function is as follows. Catalyzes the conversion of heme O to heme A by two successive hydroxylations of the methyl group at C8. The first hydroxylation forms heme I, the second hydroxylation results in an unstable dihydroxymethyl group, which spontaneously dehydrates, resulting in the formyl group of heme A. In Rhodopseudomonas palustris (strain BisB5), this protein is Heme A synthase.